A 3094-amino-acid chain; its full sequence is Replicase polyprotein 1ab (3094 aa).

Catalysis depends on for leader protease activity residues Cys-509 and His-569. The stretch at 622–647 forms a coiled coil; the sequence is ARSVEKDLIDFKDEIKSLSKEKRSVT. Residues 670 to 857 enclose the Alphavirus-like MT domain; sequence SFTHSVYSDH…HKLSNIKSIM (188 aa). Residues 1807 to 1816 show a composition bias toward low complexity; the sequence is DSESVSSDEV. The segment at 1807–1828 is disordered; it reads DSESVSSDEVASNPRPGLHGGS. Residues 2215 to 2387 enclose the (+)RNA virus helicase ATP-binding domain; it reads TQTNFVSANA…FVDDESRVYG (173 aa). A (+)RNA virus helicase C-terminal domain is found at 2388–2548; it reads EVSYRCPWDV…AYRVYPTSFG (161 aa). Positions 2817–2930 constitute a RdRp catalytic domain; sequence YNVGEIDFSK…FSESPIRNSA (114 aa).

Post-translationally, the leader protease is released by autoproteolysis.

It is found in the host cytoplasmic vesicle membrane. The enzyme catalyses RNA(n) + a ribonucleoside 5'-triphosphate = RNA(n+1) + diphosphate. The catalysed reaction is ATP + H2O = ADP + phosphate + H(+). Its function is as follows. L-pro is involved in systemic transport and in RNA amplification. RNA-dependent RNA polymerase replicates the viral genome. The chain is Replicase polyprotein 1ab from Beet yellows virus (isolate Ukraine) (BYV).